A 341-amino-acid polypeptide reads, in one-letter code: Beta-hexosaminidase (341 aa).

Substrate-binding positions include D61, R69, R134, and 164-165; that span reads KH. The active-site Proton donor/acceptor is H177. D249 (nucleophile) is an active-site residue.

Belongs to the glycosyl hydrolase 3 family. NagZ subfamily.

It is found in the cytoplasm. It catalyses the reaction Hydrolysis of terminal non-reducing N-acetyl-D-hexosamine residues in N-acetyl-beta-D-hexosaminides.. The protein operates within cell wall biogenesis; peptidoglycan recycling. Functionally, plays a role in peptidoglycan recycling by cleaving the terminal beta-1,4-linked N-acetylglucosamine (GlcNAc) from peptide-linked peptidoglycan fragments, giving rise to free GlcNAc, anhydro-N-acetylmuramic acid and anhydro-N-acetylmuramic acid-linked peptides. The sequence is that of Beta-hexosaminidase from Shewanella frigidimarina (strain NCIMB 400).